Consider the following 613-residue polypeptide: Dihydroxy-acid dehydratase (613 aa).

Asp81 contributes to the Mg(2+) binding site. Cys122 is a binding site for [2Fe-2S] cluster. Mg(2+) is bound by residues Asp123 and Lys124. Lys124 is subject to N6-carboxylysine. Cys197 lines the [2Fe-2S] cluster pocket. Glu493 contributes to the Mg(2+) binding site. Ser519 acts as the Proton acceptor in catalysis.

It belongs to the IlvD/Edd family. As to quaternary structure, homodimer. Requires [2Fe-2S] cluster as cofactor. The cofactor is Mg(2+).

The catalysed reaction is (2R)-2,3-dihydroxy-3-methylbutanoate = 3-methyl-2-oxobutanoate + H2O. It catalyses the reaction (2R,3R)-2,3-dihydroxy-3-methylpentanoate = (S)-3-methyl-2-oxopentanoate + H2O. It functions in the pathway amino-acid biosynthesis; L-isoleucine biosynthesis; L-isoleucine from 2-oxobutanoate: step 3/4. Its pathway is amino-acid biosynthesis; L-valine biosynthesis; L-valine from pyruvate: step 3/4. Functionally, functions in the biosynthesis of branched-chain amino acids. Catalyzes the dehydration of (2R,3R)-2,3-dihydroxy-3-methylpentanoate (2,3-dihydroxy-3-methylvalerate) into 2-oxo-3-methylpentanoate (2-oxo-3-methylvalerate) and of (2R)-2,3-dihydroxy-3-methylbutanoate (2,3-dihydroxyisovalerate) into 2-oxo-3-methylbutanoate (2-oxoisovalerate), the penultimate precursor to L-isoleucine and L-valine, respectively. The polypeptide is Dihydroxy-acid dehydratase (Corynebacterium glutamicum (strain R)).